A 583-amino-acid chain; its full sequence is NudC domain-containing protein 1 (583 aa).

Ser8 is modified (phosphoserine). The CS domain maps to 273 to 361 (IKEPLYYWQQ…NEGLTWPELV (89 aa)). Ser388 carries the phosphoserine modification.

Isoform 1 is specifically expressed in leukemias and a variety of solid tumor cell lines and is also detected in testis and heart. Isoform 2 is predominantly expressed in testis and weakly expressed in tumor cells.

Its subcellular location is the cytoplasm. The protein localises to the nucleus. The sequence is that of NudC domain-containing protein 1 from Homo sapiens (Human).